The primary structure comprises 252 residues: Phosphate import ATP-binding protein PstB 2 (252 aa).

Positions 6–247 (ISINDLSVYF…PQHKETEDYI (242 aa)) constitute an ABC transporter domain. 38–45 (GPSGSGKS) lines the ATP pocket.

Belongs to the ABC transporter superfamily. Phosphate importer (TC 3.A.1.7) family. The complex is composed of two ATP-binding proteins (PstB), two transmembrane proteins (PstC and PstA) and a solute-binding protein (PstS).

It is found in the cell membrane. It carries out the reaction phosphate(out) + ATP + H2O = ADP + 2 phosphate(in) + H(+). In terms of biological role, part of the ABC transporter complex PstSACB involved in phosphate import. Responsible for energy coupling to the transport system. The protein is Phosphate import ATP-binding protein PstB 2 of Streptococcus thermophilus (strain CNRZ 1066).